Consider the following 242-residue polypeptide: Orotidine 5'-phosphate decarboxylase (242 aa).

Residues Asp16, Lys37, 64 to 73 (DLKFHDIPNT), Thr128, Arg190, Gln199, Gly219, and Arg220 contribute to the substrate site. Catalysis depends on Lys66, which acts as the Proton donor.

Belongs to the OMP decarboxylase family. Type 1 subfamily. Homodimer.

It carries out the reaction orotidine 5'-phosphate + H(+) = UMP + CO2. It participates in pyrimidine metabolism; UMP biosynthesis via de novo pathway; UMP from orotate: step 2/2. Functionally, catalyzes the decarboxylation of orotidine 5'-monophosphate (OMP) to uridine 5'-monophosphate (UMP). The protein is Orotidine 5'-phosphate decarboxylase of Prochlorococcus marinus (strain AS9601).